We begin with the raw amino-acid sequence, 437 residues long: 2-methylisoborneol synthase (437 aa).

The disordered stretch occupies residues 32 to 125 (AHDSEATVGG…IPGLYHHPVP (94 aa)). A compositionally biased stretch (pro residues) spans 59 to 73 (PPSPAAPPTDVPAPE). Mg(2+) contacts are provided by aspartate 194, aspartate 195, glutamate 199, asparagine 342, serine 346, and glutamate 350.

Belongs to the terpene synthase family. 2-methylisoborneol synthase subfamily. Requires Mg(2+) as cofactor.

The enzyme catalyses (E)-2-methylgeranyl diphosphate + H2O = 2-methylisoborneol + diphosphate. In terms of biological role, catalyzes the cyclization of 2-methylgeranyl diphosphate (2-MeGPP) to 2-methylisoborneol (2-MIB), which likely involves the intermediacy of 2-methyllinalyl diphosphate. This is 2-methylisoborneol synthase from Streptomyces griseus.